We begin with the raw amino-acid sequence, 113 residues long: Prefoldin subunit beta (113 aa).

This sequence belongs to the prefoldin subunit beta family. As to quaternary structure, heterohexamer of two alpha and four beta subunits.

The protein localises to the cytoplasm. Functionally, molecular chaperone capable of stabilizing a range of proteins. Seems to fulfill an ATP-independent, HSP70-like function in archaeal de novo protein folding. This Methanococcus maripaludis (strain C7 / ATCC BAA-1331) protein is Prefoldin subunit beta.